The sequence spans 171 residues: S-ribosylhomocysteine lyase (171 aa).

Fe cation-binding residues include His54, His58, and Cys128.

This sequence belongs to the LuxS family. In terms of assembly, homodimer. The cofactor is Fe cation.

The enzyme catalyses S-(5-deoxy-D-ribos-5-yl)-L-homocysteine = (S)-4,5-dihydroxypentane-2,3-dione + L-homocysteine. Functionally, involved in the synthesis of autoinducer 2 (AI-2) which is secreted by bacteria and is used to communicate both the cell density and the metabolic potential of the environment. The regulation of gene expression in response to changes in cell density is called quorum sensing. Catalyzes the transformation of S-ribosylhomocysteine (RHC) to homocysteine (HC) and 4,5-dihydroxy-2,3-pentadione (DPD). The chain is S-ribosylhomocysteine lyase from Aliarcobacter butzleri (strain RM4018) (Arcobacter butzleri).